The following is a 710-amino-acid chain: U3 small nucleolar RNA-associated protein 4 (710 aa).

WD repeat units follow at residues 11–59, 64–105, 108–147, 154–192, 199–241, 290–327, 328–365, 488–527, and 529–569; these read YTPS…CLKT, GVDR…PLVN, SNAG…GVIE, RQTS…SAII, RARK…LSQS, FHSH…RQFN, RKNH…LWRI, SMCD…YSEL, and RVNT…LSEW.

As to quaternary structure, component of the ribosomal small subunit (SSU) processome.

It localises to the nucleus. It is found in the nucleolus. Its function is as follows. Involved in nucleolar processing of pre-18S ribosomal RNA. Required for optimal pre-ribosomal RNA transcription by RNA polymerase I together with a subset of U3 proteins required for transcription (t-UTPs). The sequence is that of U3 small nucleolar RNA-associated protein 4 (utp4) from Schizosaccharomyces pombe (strain 972 / ATCC 24843) (Fission yeast).